The following is a 336-amino-acid chain: Ephrin-B2 (336 aa).

The signal sequence occupies residues 1–28 (MAMARSRRDSVWKYCWGLLMVLCRTAIS). Topologically, residues 29–232 (RSIVLEPIYW…LLGSEVALFA (204 aa)) are extracellular. One can recognise an Ephrin RBD domain in the interval 31–167 (IVLEPIYWNS…TRAMKILMKV (137 aa)). N-linked (GlcNAc...) asparagine glycosylation occurs at Asn39. 2 disulfide bridges follow: Cys65/Cys104 and Cys92/Cys156. The N-linked (GlcNAc...) asparagine glycan is linked to Asn142. Positions 170–216 (DASSAGSARNHGPTRRPELEAGTNGRSSTTSPFVKPNPGSSTDGNSA) are disordered. Residues 193–216 (NGRSSTTSPFVKPNPGSSTDGNSA) show a composition bias toward polar residues. Residues 233–253 (GIASGCIIFIVIIITLVVLLL) traverse the membrane as a helical segment. The Cytoplasmic portion of the chain corresponds to 254–336 (KYRRRHRKHS…QSPANIYYKV (83 aa)). The residue at position 263 (Ser263) is a Phosphoserine. Position 277 is a phosphothreonine (Thr277). Omega-N-methylarginine is present on Arg280. A PDZ-binding motif is present at residues 334 to 336 (YKV).

It belongs to the ephrin family. Interacts with PDZRN3. Binds to the ephrin receptor EPHA3, EPHA4 and EPHB4. In terms of processing, inducible phosphorylation of tyrosine residues in the cytoplasmic domain. As to expression, expressed in inner and outer pillar cells of the organ of Corti (at protein level). Expressed on lateral floor plate cells, specifically on commissural axon segments that have passed through the floor plate. Expressed in cells of the retinal ganglion cell layer during retinal axon guidance to the optic disk. Expressed in myogenic progenitor cells.

The protein localises to the cell membrane. Its subcellular location is the cell junction. The protein resides in the adherens junction. In terms of biological role, cell surface transmembrane ligand for Eph receptors, a family of receptor tyrosine kinases which are crucial for migration, repulsion and adhesion during neuronal, vascular and epithelial development. Binds promiscuously Eph receptors residing on adjacent cells, leading to contact-dependent bidirectional signaling into neighboring cells. The signaling pathway downstream of the receptor is referred to as forward signaling while the signaling pathway downstream of the ephrin ligand is referred to as reverse signaling. Binds to receptor tyrosine kinase including EPHA4, EPHA3 and EPHB4. Together with EPHB4 plays a central role in heart morphogenesis and angiogenesis through regulation of cell adhesion and cell migration. EPHB4-mediated forward signaling controls cellular repulsion and segregation from EFNB2-expressing cells. May play a role in constraining the orientation of longitudinally projecting axons. This is Ephrin-B2 (Efnb2) from Mus musculus (Mouse).